Here is a 495-residue protein sequence, read N- to C-terminus: Glycerol kinase (495 aa).

Position 13 (Thr-13) interacts with ADP. ATP-binding residues include Thr-13, Thr-14, and Ser-15. Sn-glycerol 3-phosphate is bound at residue Thr-13. An ADP-binding site is contributed by Arg-17. Sn-glycerol 3-phosphate-binding residues include Arg-83, Glu-84, Tyr-135, and Asp-244. Residues Arg-83, Glu-84, Tyr-135, Asp-244, and Gln-245 each coordinate glycerol. ADP is bound by residues Thr-266 and Gly-309. 4 residues coordinate ATP: Thr-266, Gly-309, Gln-313, and Gly-410. Residues Gly-410 and Asn-414 each contribute to the ADP site.

This sequence belongs to the FGGY kinase family.

It carries out the reaction glycerol + ATP = sn-glycerol 3-phosphate + ADP + H(+). It participates in polyol metabolism; glycerol degradation via glycerol kinase pathway; sn-glycerol 3-phosphate from glycerol: step 1/1. Its activity is regulated as follows. Inhibited by fructose 1,6-bisphosphate (FBP). Functionally, key enzyme in the regulation of glycerol uptake and metabolism. Catalyzes the phosphorylation of glycerol to yield sn-glycerol 3-phosphate. The polypeptide is Glycerol kinase (Shewanella sediminis (strain HAW-EB3)).